We begin with the raw amino-acid sequence, 173 residues long: Co-chaperone protein HscB homolog (173 aa).

The 73-residue stretch at 3-75 (NPFSLFNLPV…IARATAIIEI (73 aa)) folds into the J domain.

Belongs to the HscB family. Interacts with HscA and stimulates its ATPase activity.

Functionally, co-chaperone involved in the maturation of iron-sulfur cluster-containing proteins. Seems to help targeting proteins to be folded toward HscA. This chain is Co-chaperone protein HscB homolog, found in Haemophilus ducreyi (strain 35000HP / ATCC 700724).